The following is a 521-amino-acid chain: Exodeoxyribonuclease 7 large subunit (521 aa).

The disordered stretch occupies residues 494 to 521; it reads ATSGAARPKPAAKPSTKAKEPGNQGSLF. Low complexity predominate over residues 498 to 508; it reads AARPKPAAKPS.

This sequence belongs to the XseA family. In terms of assembly, heterooligomer composed of large and small subunits.

It is found in the cytoplasm. The catalysed reaction is Exonucleolytic cleavage in either 5'- to 3'- or 3'- to 5'-direction to yield nucleoside 5'-phosphates.. In terms of biological role, bidirectionally degrades single-stranded DNA into large acid-insoluble oligonucleotides, which are then degraded further into small acid-soluble oligonucleotides. This Mesorhizobium japonicum (strain LMG 29417 / CECT 9101 / MAFF 303099) (Mesorhizobium loti (strain MAFF 303099)) protein is Exodeoxyribonuclease 7 large subunit.